The sequence spans 356 residues: Solute carrier family 25 member 3 (356 aa).

The transit peptide at 1–44 (MFSSVAHLARANPFNAPHLQLVHDVSGPRSPPGPPRRSRHLAAA) directs the protein to the mitochondrion. Residues 45–57 (AVEGYSCEFGSMK) are Mitochondrial intermembrane-facing. Solcar repeat units lie at residues 57-141 (KYYA…FKAL), 154-238 (WRTS…TVEA), and 255-333 (EQLV…VKVY). The helical transmembrane segment at 58 to 80 (YYALCGFGGVLSCGLTHTAVVPL) threads the bilayer. The Mitochondrial matrix portion of the chain corresponds to 81 to 115 (DLVKCRMQVDPQKYKGIFNGFSITLKEDGVRGLAK). Lysine 93 carries the post-translational modification N6-acetyllysine. Position 106 is an N6-methyllysine (lysine 106). The helical transmembrane segment at 116–135 (GWAPTLIGYSMQGLCKFGFY) threads the bilayer. Residues 136–155 (EVFKALYSNILGEENTYLWR) are Mitochondrial intermembrane-facing. Residues 156–177 (TSLYLAASASAEFFADIALAPM) traverse the membrane as a helical segment. At 178–212 (EAAKVRIQTQPGYANTLREAVPKMYKEEGLNAFYK) the chain is on the mitochondrial matrix side. Phosphotyrosine is present on tyrosine 190. N6-acetyllysine is present on lysine 203. A helical membrane pass occupies residues 213–232 (GVAPVWMRQIPYTMMKFACF). Residues 233 to 255 (ERTVEALYKFVVPKPRSECTKAE) lie on the Mitochondrial intermembrane side of the membrane. The helical transmembrane segment at 256-278 (QLVVTFVAGYIAGVFCAIVSHPA) threads the bilayer. Over 279–308 (DSVVSVLNKEKGSTASQVLQRLGFRGVWKG) the chain is Mitochondrial matrix. Residues 309–327 (LFARIIMIGTLTALQWFIY) traverse the membrane as a helical segment. The Mitochondrial intermembrane portion of the chain corresponds to 328 to 356 (DSVKVYFRLPRPPPPEMPESLKKKLGLTE).

The protein belongs to the mitochondrial carrier (TC 2.A.29) family. As to quaternary structure, interacts with PPIF; the interaction is impaired by CsA.

Its subcellular location is the mitochondrion inner membrane. The catalysed reaction is phosphate(in) + H(+)(in) = phosphate(out) + H(+)(out). Inorganic ion transporter that transports phosphate or copper ions across the mitochondrial inner membrane into the matrix compartment. Mediates proton-coupled symport of phosphate ions necessary for mitochondrial oxidative phosphorylation of ADP to ATP. Transports copper ions probably in the form of anionic copper(I) complexes to maintain mitochondrial matrix copper pool and to supply copper for cytochrome C oxidase complex assembly. May also play a role in regulation of the mitochondrial permeability transition pore (mPTP). This is Solute carrier family 25 member 3 from Rattus norvegicus (Rat).